The following is a 421-amino-acid chain: MDKIQKIKGFADLFPPDSTVFSFIEETARQVFSRYGYKELRVPVLERTELFCRSIGEETDVVQKEMYTFPDRKGRSLTLRPEATAGVMRALVEDGRASEGLAKYFAYGPMFRYERPQKGRMRQFHQIDVEAVGSPDALLDAEVLLMLDQYLRALGLKNLVIELNSLGCKACRPIFLDTLREFLKGMHKEQLCEDCMRRKLSNPLRVLDCKVPQCKEFTADAPKITDHLCPDCADHFAAVRRVLDGAGLAYTLNPRLVRGLDYYVRTTFEIVSGDIGSQSSVAGGGRYDGLVHSIGGPDVPGVGFACGMERLALLIDKKAEPAPDFALVVLDAIGLERGLLLAQELRAAGFSGEAPYAAKSAKSQMRAADKSGAAFCLVLGSDELAAGTVVVKNMRAGGQETVSQDILPAHLRARLVAGQED.

The protein belongs to the class-II aminoacyl-tRNA synthetase family. As to quaternary structure, homodimer.

The protein localises to the cytoplasm. The enzyme catalyses tRNA(His) + L-histidine + ATP = L-histidyl-tRNA(His) + AMP + diphosphate + H(+). The chain is Histidine--tRNA ligase from Solidesulfovibrio magneticus (strain ATCC 700980 / DSM 13731 / RS-1) (Desulfovibrio magneticus).